A 146-amino-acid polypeptide reads, in one-letter code: MORN repeat-containing protein 4 (146 aa).

MORN repeat units lie at residues Tyr-16–Thr-38, Tyr-39–Arg-61, Tyr-62–Thr-84, and Phe-85–His-107.

Interacts with MYO3A.

It is found in the cytoplasm. The protein resides in the cell projection. Its subcellular location is the filopodium tip. The protein localises to the stereocilium. Plays a role in promoting axonal degeneration following neuronal injury by toxic insult or trauma. The protein is MORN repeat-containing protein 4 (MORN4) of Homo sapiens (Human).